Reading from the N-terminus, the 150-residue chain is Viral late gene transcription factor 2 (150 aa).

This sequence belongs to the orthopoxvirus VLTF-2/OPG126 family. Interacts with itself. Interacts with the late transcription factors VLTF-1/OPG093.

Functionally, acts with RNA polymerase to initiate transcription from late gene promoters. The polypeptide is Viral late gene transcription factor 2 (OPG126) (Vaccinia virus (strain Copenhagen) (VACV)).